The sequence spans 146 residues: Spermidine export protein MdtJ (146 aa).

A run of 4 helical transmembrane segments spans residues 1–21 (MIYWIFLVLAIICEVIGTLSM), 31–51 (TGMIVMWLMIATSYIFLAIAV), 54–74 (VALGVAYALWEGIGIVIITTF), and 76–96 (VLWFGESLSALKLGGLAMLIA).

This sequence belongs to the drug/metabolite transporter (DMT) superfamily. Small multidrug resistance (SMR) (TC 2.A.7.1) family. MdtJ subfamily. In terms of assembly, forms a complex with MdtI.

Its subcellular location is the cell inner membrane. Its function is as follows. Catalyzes the excretion of spermidine. The polypeptide is Spermidine export protein MdtJ (Proteus mirabilis (strain HI4320)).